Here is a 153-residue protein sequence, read N- to C-terminus: Lectin-like protein EP153R (153 aa).

Residues 1–30 (MYFKKKYIGLIDKNCEKKILDDSSTIKICY) are Cytoplasmic-facing. Residues 31 to 51 (ILIGILIGTNMITLIYNFIFW) form a helical membrane-spanning segment. Topologically, residues 52–153 (DNYIKCYRNN…YTDLLFICGK (102 aa)) are extracellular. A disulfide bridge connects residues Cys-67 and Cys-78. Residues Asn-83, Asn-89, Asn-101, Asn-107, Asn-113, Asn-120, Asn-127, and Asn-143 are each glycosylated (N-linked (GlcNAc...) asparagine; by host). Cys-97 and Cys-151 form a disulfide bridge.

It belongs to the asfivirus lectin-like protein family. In terms of assembly, homodimer.

It is found in the host endoplasmic reticulum membrane. Functionally, down-regulates MHC-I expression by impairing the appropriate configuration or presentation into the plasma membrane of the latter. Participates in viral hemadsorption, which may help viral spread. Reduces the transactivating activity of host TP53, thus inhibiting apoptosis. Non-essential for virus growth in swine macrophage cell cultures. In African swine fever virus (strain Badajoz 1971 Vero-adapted) (Ba71V), this protein is Lectin-like protein EP153R.